The chain runs to 581 residues: MVFSVAKKDTTPYEGQKPGTSGLRKKVTVFQQPHYLANFVQSTFNALPAEEVKGATIVVSGDGRYFSKDAVQIIAKMAAANGVRRVWVGQGSLLSTPAVSAIIRERIAADGSKATGGFILTASHNPGGPTEDFGIKYNMGNGGPAPESVTDKIFSNTKTISEYLIAEDLPDVDISVIGVTTFTGPEGPFDVDVFDSATEYVKLMKTIFDFESIKKLLASPKFSFCFDGMHGVAGAYAKRIFVDELGASESSLLNCVPKEDFGGGHPDPNLTYAKELVDRMGLGKTSNVEPPEFGAAADGDADRNMILGKRFFVTPSDSVAIIAANAVQSIPYFASGLKGVARSMPTSAALDVVAKNLNLKFFEVPTGWKFFGNLMDAGMCSVCGEESFGTGSDHIREKDGIWAVLAWLSILAYKNKDNLGGDKLVTVENIVLQHWGIYGRHYYTRYDYENVDAEAAKELMANLVKMQSSLSDVNKLIKEIQPNVADVVSADEFEYTDPVDGSVSKHQGIRYLFGDGSRLVFRLSGTGSVGATIRIYIEQYEKDSSKTGRESSDALSPLVDVALKLSKIQELTGRSAPTVIT.

The span at 1–11 shows a compositional bias: basic and acidic residues; the sequence is MVFSVAKKDTT. Residues 1-20 are disordered; that stretch reads MVFSVAKKDTTPYEGQKPGT. Alpha-D-glucose 1,6-bisphosphate contacts are provided by Arg24 and Ser123. Ser123 (phosphoserine intermediate) is an active-site residue. Residues Ser123, Asp298, Asp300, and Asp302 each coordinate Mg(2+). Ser123 carries the post-translational modification Phosphoserine. Residues Asp302, Arg303, Thr366, Glu385, Ser387, and Lys398 each coordinate alpha-D-glucose 1,6-bisphosphate.

This sequence belongs to the phosphohexose mutase family. In terms of assembly, monomer. Requires Mg(2+) as cofactor.

The protein resides in the cytoplasm. The enzyme catalyses alpha-D-glucose 1-phosphate = alpha-D-glucose 6-phosphate. It carries out the reaction O-phospho-L-seryl-[protein] + alpha-D-glucose 1-phosphate = alpha-D-glucose 1,6-bisphosphate + L-seryl-[protein]. It catalyses the reaction alpha-D-glucose 1,6-bisphosphate + L-seryl-[protein] = O-phospho-L-seryl-[protein] + alpha-D-glucose 6-phosphate. Its function is as follows. Catalyzes the reversible isomerization of alpha-D-glucose 1-phosphate to alpha-D-glucose 6-phosphate. The mechanism proceeds via the intermediate compound alpha-D-glucose 1,6-bisphosphate. This enzyme participates in both the breakdown and synthesis of glucose. The chain is Phosphoglucomutase, cytoplasmic (PGM1) from Bromus inermis (Smooth brome grass).